A 708-amino-acid polypeptide reads, in one-letter code: Glycogen [starch] synthase isoform 1 (708 aa).

Residue Arg-20 participates in UDP binding. Phosphoserine is present on Ser-159. Residues His-193 and Arg-199 each contribute to the UDP-alpha-D-glucose site. Residues His-280, Glu-281, Gln-283, His-286, and Lys-290 each coordinate alpha-D-glucose 6-phosphate. Arg-320 lines the UDP pocket. Arg-320 is a UDP-alpha-D-glucose binding site. The residue at position 363 (Ser-363) is a Phosphoserine. His-500 contributes to the alpha-D-glucose 6-phosphate binding site. UDP-alpha-D-glucose contacts are provided by Glu-509, Trp-511, and Gly-512. Thr-514 serves as a coordination point for UDP. At Ser-560 the chain carries Phosphoserine. 2 residues coordinate alpha-D-glucose 6-phosphate: Arg-583 and Arg-587. 2 positions are modified to phosphoserine: Ser-651 and Ser-655. A phosphoserine; by PKA mark is found at Ser-660 and Ser-662. Positions 687–708 (STNGAIDNDDDDNDTSAYYEDN) are disordered. Positions 693-708 (DNDDDDNDTSAYYEDN) are enriched in acidic residues.

Belongs to the glycosyltransferase 3 family.

It carries out the reaction [(1-&gt;4)-alpha-D-glucosyl](n) + UDP-alpha-D-glucose = [(1-&gt;4)-alpha-D-glucosyl](n+1) + UDP + H(+). It functions in the pathway glycan biosynthesis; glycogen biosynthesis. With respect to regulation, allosteric activation by glucose-6-phosphate, and phosphorylation by a cAMP-dependent kinase. In terms of biological role, glycogen synthase participates in the glycogen biosynthetic process along with glycogenin and glycogen branching enzyme. Extends the primer composed of a few glucose units formed by glycogenin by adding new glucose units to it. In this context, glycogen synthase transfers the glycosyl residue from UDP-Glc to the non-reducing end of alpha-1,4-glucan. This is Glycogen [starch] synthase isoform 1 (GSY1) from Saccharomyces cerevisiae (strain ATCC 204508 / S288c) (Baker's yeast).